A 597-amino-acid chain; its full sequence is Elongation factor 4 (597 aa).

Positions 2–184 (KNIRNFSIIA…TIVAKVPAPE (183 aa)) constitute a tr-type G domain. Residues 14-19 (DHGKST) and 131-134 (NKID) each bind GTP.

The protein belongs to the TRAFAC class translation factor GTPase superfamily. Classic translation factor GTPase family. LepA subfamily.

The protein localises to the cell inner membrane. It catalyses the reaction GTP + H2O = GDP + phosphate + H(+). Its function is as follows. Required for accurate and efficient protein synthesis under certain stress conditions. May act as a fidelity factor of the translation reaction, by catalyzing a one-codon backward translocation of tRNAs on improperly translocated ribosomes. Back-translocation proceeds from a post-translocation (POST) complex to a pre-translocation (PRE) complex, thus giving elongation factor G a second chance to translocate the tRNAs correctly. Binds to ribosomes in a GTP-dependent manner. The chain is Elongation factor 4 from Francisella tularensis subsp. mediasiatica (strain FSC147).